The following is a 520-amino-acid chain: Nonsense-mediated mRNA decay factor SMG9 (520 aa).

Disordered regions lie at residues 1–94, 108–143, and 341–360; these read MSES…PAPL, KGPV…QRPT, and KPST…SDEG. Position 2 is an N-acetylserine (S2). S2, S4, S7, S32, and S53 each carry phosphoserine. Residues 36 to 53 show a composition bias toward basic and acidic residues; that stretch reads GRERDYIAPWERERRDAS. 2 stretches are compositionally biased toward pro residues: residues 78–94 and 122–133; these read QPPP…PAPL and TAPPPPAAPAPP. Residues 342 to 357 are compositionally biased toward low complexity; the sequence is PSTPSPSHESSSSSGS. S451 carries the post-translational modification Phosphoserine.

This sequence belongs to the SMG9 family. In terms of assembly, self-associates to form homodimers and forms heterodimers with SMG8; these assembly forms may represent SMG1C intermediate forms. Component of the SMG1C complex composed of SMG1, SMG8 and SMG9. Interacts with DHX34; the interaction is RNA-independent. Phosphorylated by SMG1.

In terms of biological role, involved in nonsense-mediated decay (NMD) of mRNAs containing premature stop codons. Is recruited by release factors to stalled ribosomes together with SMG1 and SMG8 (forming the SMG1C protein kinase complex) and, in the SMG1C complex, is required for the efficient association between SMG1 and SMG8. Plays a role in brain, heart, and eye development. The chain is Nonsense-mediated mRNA decay factor SMG9 from Homo sapiens (Human).